Here is a 371-residue protein sequence, read N- to C-terminus: Protein IQ-DOMAIN 7 (371 aa).

The tract at residues 1–32 is disordered; sequence MGGSGNWIRSLISNRKPVNDQQEKLSDKSSKK. Residues 17 to 29 are compositionally biased toward basic and acidic residues; the sequence is PVNDQQEKLSDKS. 2 IQ domains span residues 93 to 121 and 122 to 144; these read REWA…AVVR and IQAI…CMQA. The calmodulin-binding stretch occupies residues 125–141; it reads IFRGRQVRKQAAVTLRC. Disordered regions lie at residues 285-308 and 327-371; these read SGMS…PVAF and LTQS…SQRS. Composition is skewed to polar residues over residues 297-308 and 327-341; these read STSSTSQSPVAF and LTQS…SGLS.

The protein belongs to the IQD family. Binds to multiple calmodulin (CaM) in the presence of Ca(2+) and CaM-like proteins.

The protein resides in the nucleus. Its subcellular location is the nucleus envelope. The protein localises to the cytoplasm. It is found in the cytoskeleton. May be involved in cooperative interactions with calmodulins or calmodulin-like proteins. Recruits calmodulin proteins to microtubules, thus being a potential scaffold in cellular signaling and trafficking. May associate with nucleic acids and regulate gene expression at the transcriptional or post-transcriptional level. This is Protein IQ-DOMAIN 7 from Arabidopsis thaliana (Mouse-ear cress).